A 137-amino-acid polypeptide reads, in one-letter code: Basic phospholipase A2 homolog Pgo-K49 (137 aa).

The first 16 residues, 1 to 16 (MRTLLIVAVLLVGVEG), serve as a signal peptide directing secretion. Disulfide bonds link Cys42–Cys131, Cys44–Cys60, Cys59–Cys111, Cys65–Cys137, Cys66–Cys104, Cys73–Cys97, and Cys91–Cys102. The important for membrane-damaging activities in eukaryotes and bacteria; heparin-binding stretch occupies residues 121 to 133 (KKYKIHMKFFCKK).

Expressed by the venom gland.

The protein resides in the secreted. Snake venom phospholipase A2 homolog that lacks enzymatic activity. Is myotoxic. A model of myotoxic mechanism has been proposed: an apo Lys49-PLA2 is activated by the entrance of a hydrophobic molecule (e.g. fatty acid) at the hydrophobic channel of the protein leading to a reorientation of a monomer. This reorientation causes a transition between 'inactive' to 'active' states, causing alignment of C-terminal and membrane-docking sites (MDoS) side-by-side and putting the membrane-disruption sites (MDiS) in the same plane, exposed to solvent and in a symmetric position for both monomers. The MDoS region stabilizes the toxin on membrane by the interaction of charged residues with phospholipid head groups. Subsequently, the MDiS region destabilizes the membrane with penetration of hydrophobic residues. This insertion causes a disorganization of the membrane, allowing an uncontrolled influx of ions (i.e. calcium and sodium), and eventually triggering irreversible intracellular alterations and cell death. The sequence is that of Basic phospholipase A2 homolog Pgo-K49 from Cerrophidion godmani (Porthidium godmani).